Here is a 67-residue protein sequence, read N- to C-terminus: Light-harvesting protein B-870 alpha chain (67 aa).

M1 is subject to N-formylmethionine; in strain DSM 149 and DSM 151. Topologically, residues M1–R12 are cytoplasmic. Residues A13–L33 form a helical membrane-spanning segment. H29 contacts a bacteriochlorophyll. Topologically, residues G34–K67 are periplasmic.

It belongs to the antenna complex alpha subunit family. As to quaternary structure, an alpha/beta heterodimer. The core complex is formed by different alpha and beta chains, binding bacteriochlorophyll molecules, and arranged most probably in tetrameric structures disposed around the reaction center. The non-pigmented gamma chains may constitute additional components. Post-translationally, the N-terminus is blocked.

The protein resides in the cell inner membrane. Functionally, antenna complexes are light-harvesting systems, which transfer the excitation energy to the reaction centers. The chain is Light-harvesting protein B-870 alpha chain (pufA) from Rubrivivax gelatinosus (Rhodocyclus gelatinosus).